Here is a 557-residue protein sequence, read N- to C-terminus: ETHYLENE INSENSITIVE 3-like 5 protein (557 aa).

2 disordered regions span residues 1-23 and 61-96; these read MVEV…DLEE and NLNS…RKKM. Positions 64 to 82 are enriched in low complexity; that stretch reads SVISSPSSSTSASSSSSSS. Positions 270-311 form a coiled coil; that stretch reads ERVRRLARQSKCLQDKMMAKETDTWSRVLNQEEARLNRLKIS.

Belongs to the EIN3 family.

It is found in the nucleus. Its function is as follows. Putative transcription factor that may be involved in the ethylene response pathway. The polypeptide is ETHYLENE INSENSITIVE 3-like 5 protein (EIL5) (Arabidopsis thaliana (Mouse-ear cress)).